Reading from the N-terminus, the 44-residue chain is Conotoxin Fi11.11 (44 aa).

Intrachain disulfides connect cysteine 1–cysteine 15, cysteine 8–cysteine 20, cysteine 14–cysteine 24, and cysteine 19–cysteine 28. The residue at position 30 (asparagine 30) is an Asparagine amide. Positions 35 to 44 (QVPLKSFGQR) are excised as a propeptide.

This sequence belongs to the conotoxin I2 superfamily. In terms of tissue distribution, expressed by the venom duct.

It localises to the secreted. In Conus figulinus (Fig cone), this protein is Conotoxin Fi11.11.